Consider the following 352-residue polypeptide: Ion-translocating oxidoreductase complex subunit D (352 aa).

The next 4 membrane-spanning stretches (helical) occupy residues 20–40 (IMLLVLIAALPGIAAQTWFFG), 42–62 (GTLFQIVLAAITALVAEAIVL), 69–91 (VASHLQDYSALLTGLLLAVSIPP), and 123–143 (PAMIGYVVLLISFPVQMTSWL). Position 187 is an FMN phosphoryl threonine (threonine 187). Helical transmembrane passes span 215-235 (LAGVGWQWVNLAWLVGGVFLL), 242-262 (WHIPVSFLLTLALCAALGWLF), 267-287 (LASPQLHLLSGATMLGAFFIL), 301-321 (LIFGALAGVLVWLIRSFGGYP), and 322-342 (DGVAFAVLLANITVPLIDYYT).

This sequence belongs to the NqrB/RnfD family. In terms of assembly, the complex is composed of six subunits: RsxA, RsxB, RsxC, RsxD, RsxE and RsxG. The cofactor is FMN.

The protein localises to the cell inner membrane. Part of a membrane-bound complex that couples electron transfer with translocation of ions across the membrane. Required to maintain the reduced state of SoxR. This is Ion-translocating oxidoreductase complex subunit D from Salmonella paratyphi B (strain ATCC BAA-1250 / SPB7).